The primary structure comprises 561 residues: Carboxylesterase 4A (561 aa).

The first 20 residues, 1 to 20 (MRWILCWSLTLCLMAQTALG), serve as a signal peptide directing secretion. Cysteines 88 and 116 form a disulfide. Residue asparagine 214 is glycosylated (N-linked (GlcNAc...) asparagine). Catalysis depends on serine 221, which acts as the Acyl-ester intermediate. Cysteine 273 and cysteine 284 are oxidised to a cystine. Asparagine 276 carries N-linked (GlcNAc...) asparagine glycosylation. Residue glutamate 353 is the Charge relay system of the active site. Asparagine 388 carries N-linked (GlcNAc...) asparagine glycosylation. Histidine 467 acts as the Charge relay system in catalysis.

The protein belongs to the type-B carboxylesterase/lipase family.

It localises to the secreted. Functionally, probable carboxylesterase. This is Carboxylesterase 4A (CES4A) from Homo sapiens (Human).